The chain runs to 373 residues: MAGSEKSSLTKPRWLLAELTYACPLQCPYCSNPLDYARLGDELSTEEWKRVLSEARALGAVQLGLSGGEPLTRRDLAEIVTHARQLGYYTNLITSGYGLDEVRIAELKSAGLDHIQVSIQSPEKLLNDELAGTESFEHKLKVARWVKQHGYPMVLCVVIHRQNIHQMQQILEMADELGADYLELANTQYYGWALLNRDHLLPTREQFAEAEAIAQSYKEKVKGRMKIYYVVPDYYEDRPKACMNGWGTTFLTIAPDGMALPCHAARELPGLNCPSVRDFSIREIWYESAAFNRFRSYGWMKEPCRSCPEKEKDFGGCRCQAYLMTGDMADADPVCSKSPHHHRVLEAIASTQRSASDKPLFFRNARNSRALTG.

Residues 9-224 (LTKPRWLLAE…QSYKEKVKGR (216 aa)) enclose the Radical SAM core domain. [4Fe-4S] cluster-binding residues include C23, C27, and C30.

It belongs to the radical SAM superfamily. PqqE family. In terms of assembly, interacts with PqqD. The interaction is necessary for activity of PqqE. The cofactor is [4Fe-4S] cluster.

The enzyme catalyses [PQQ precursor protein] + S-adenosyl-L-methionine = E-Y cross-linked-[PQQ precursor protein] + 5'-deoxyadenosine + L-methionine + H(+). Its pathway is cofactor biosynthesis; pyrroloquinoline quinone biosynthesis. Its function is as follows. Catalyzes the cross-linking of a glutamate residue and a tyrosine residue in the PqqA protein as part of the biosynthesis of pyrroloquinoline quinone (PQQ). This chain is PqqA peptide cyclase, found in Methylococcus capsulatus (strain ATCC 33009 / NCIMB 11132 / Bath).